Reading from the N-terminus, the 359-residue chain is Small ribosomal subunit protein uS2 (359 aa).

Residues 232 to 295 are disordered; it reads EPQFKPSEFT…PVGTEPVATT (64 aa). Composition is skewed to basic and acidic residues over residues 239–250 and 257–273; these read EFTRRDGDENRN and DNRR…DTHY.

The protein belongs to the universal ribosomal protein uS2 family.

This is Small ribosomal subunit protein uS2 (rpsB) from Spiroplasma citri.